Here is a 47-residue protein sequence, read N- to C-terminus: Large ribosomal subunit protein bL34 (47 aa).

Residues 1 to 47 are disordered; that stretch reads MVTEGLKPHISIKKKKRKSGFLARMRTKSGRKIIARRRRKGRKRLAP. Basic residues predominate over residues 10-47; it reads ISIKKKKRKSGFLARMRTKSGRKIIARRRRKGRKRLAP.

The protein belongs to the bacterial ribosomal protein bL34 family.

This chain is Large ribosomal subunit protein bL34 (rpmH), found in Aquifex aeolicus (strain VF5).